The following is a 1165-amino-acid chain: Symplekin (1165 aa).

HEAT repeat units follow at residues Thr23–Gly58, Ala61–Lys95, Val98–Ser140, Ser147–Val186, and Lys218–Met257. The tract at residues Asp365 to Lys384 is disordered. Residues Gln367–Lys384 are compositionally biased toward basic and acidic residues.

The protein belongs to the Symplekin family. Interacts with Cpsf73 and Cpsf100 forming a core cleavage factor required for both polyadenylated and histone mRNA processing. Interacts with Slbp and Lsm11.

The protein resides in the nucleus. Its function is as follows. Component of a protein complex required for cotranscriptional processing of 3'-ends of polyadenylated and histone pre-mRNA. Involved in germline stem cell transit amplification, differentiation and mitosis-to-meiosis transition. This chain is Symplekin, found in Drosophila melanogaster (Fruit fly).